A 378-amino-acid chain; its full sequence is REST corepressor 3 (378 aa).

Positions 1 to 83 (MRVGAEYQAR…KSLADLPNFT (83 aa)) constitute an ELM2 domain. The SANT domain maps to 84-135 (PFPDEWTVEDKVLFEQAFSFHGKSFHRIQQMLPDKTIASLVKYYYSWKKTRS). The tract at residues 147-219 (LANRNNQGDS…SQRSKCRPPK (73 aa)) is disordered. Positions 162 to 184 (EPHPMDGNDSDYDPKKEAKKEGN) are enriched in basic and acidic residues. Residues 205 to 217 (QHRHHSQRSKCRP) are compositionally biased toward basic residues. The stretch at 238 to 273 (ANTILRRLDMELISLKRQVQNAKQVNSALKQKMEGG) forms a coiled coil. The tract at residues 337 to 356 (TASSTSCCSCSPPSASAAPT) is disordered.

It belongs to the CoREST family.

The protein localises to the nucleus. In terms of biological role, may act as a component of a corepressor complex that represses transcription. The polypeptide is REST corepressor 3 (RCOR3) (Gallus gallus (Chicken)).